We begin with the raw amino-acid sequence, 423 residues long: uncharacterized protein (423 aa).

Residues 75 to 145 (LHVVVTQPIA…PIVNNIKVAG (71 aa)) form the BON domain.

This sequence belongs to the bacterial secretin family.

Functionally, involved in the secretion of an unknown compound. This is an uncharacterized protein from Sinorhizobium fredii (strain NBRC 101917 / NGR234).